The following is a 78-amino-acid chain: Large ribosomal subunit protein uL30 (78 aa).

Over residues 58–68 (DDTSPDAETGA) the composition is skewed to acidic residues. The disordered stretch occupies residues 58–78 (DDTSPDAETGADLERDGGNRS). Over residues 69–78 (DLERDGGNRS) the composition is skewed to basic and acidic residues.

Belongs to the universal ribosomal protein uL30 family. As to quaternary structure, part of the 50S ribosomal subunit.

The polypeptide is Large ribosomal subunit protein uL30 (Roseiflexus sp. (strain RS-1)).